The sequence spans 471 residues: ATP synthase subunit beta (471 aa).

ATP is bound at residue 156–163 (GGAGVGKT).

It belongs to the ATPase alpha/beta chains family. F-type ATPases have 2 components, CF(1) - the catalytic core - and CF(0) - the membrane proton channel. CF(1) has five subunits: alpha(3), beta(3), gamma(1), delta(1), epsilon(1). CF(0) has three main subunits: a(1), b(2) and c(9-12). The alpha and beta chains form an alternating ring which encloses part of the gamma chain. CF(1) is attached to CF(0) by a central stalk formed by the gamma and epsilon chains, while a peripheral stalk is formed by the delta and b chains.

The protein localises to the cell membrane. It carries out the reaction ATP + H2O + 4 H(+)(in) = ADP + phosphate + 5 H(+)(out). Functionally, produces ATP from ADP in the presence of a proton gradient across the membrane. The catalytic sites are hosted primarily by the beta subunits. The sequence is that of ATP synthase subunit beta from Mycoplasmoides gallisepticum (strain R(low / passage 15 / clone 2)) (Mycoplasma gallisepticum).